The chain runs to 129 residues: Large ribosomal subunit protein uL22 (129 aa).

This sequence belongs to the universal ribosomal protein uL22 family. As to quaternary structure, part of the 50S ribosomal subunit.

Functionally, this protein binds specifically to 23S rRNA; its binding is stimulated by other ribosomal proteins, e.g. L4, L17, and L20. It is important during the early stages of 50S assembly. It makes multiple contacts with different domains of the 23S rRNA in the assembled 50S subunit and ribosome. The globular domain of the protein is located near the polypeptide exit tunnel on the outside of the subunit, while an extended beta-hairpin is found that lines the wall of the exit tunnel in the center of the 70S ribosome. The polypeptide is Large ribosomal subunit protein uL22 (Beijerinckia indica subsp. indica (strain ATCC 9039 / DSM 1715 / NCIMB 8712)).